The chain runs to 469 residues: Cell division protein FtsP (469 aa).

The segment at residues 1–29 (MPRLSRRQLLKTAAISTALSTVPAPLLAA) is a signal peptide (tat-type signal). Positions 228 to 286 (IRLRLLNASLARAYDLRLDNDQEMLLIAQDLSFLPKAKSVKSLVLSPGERAEILVNMNE) constitute a Plastocyanin-like domain.

The protein belongs to the FtsP family. Post-translationally, predicted to be exported by the Tat system. The position of the signal peptide cleavage has not been experimentally proven.

The protein localises to the periplasm. In terms of biological role, cell division protein that is required for growth during stress conditions. May be involved in protecting or stabilizing the divisomal assembly under conditions of stress. This is Cell division protein FtsP from Haemophilus influenzae (strain 86-028NP).